A 323-amino-acid polypeptide reads, in one-letter code: GMP reductase (323 aa).

Cys174 acts as the Thioimidate intermediate in catalysis. Position 203–226 (203–226) interacts with NADP(+); sequence IIADGGIRHNGDIAKSVRFGASMV.

It belongs to the IMPDH/GMPR family. GuaC type 2 subfamily.

The catalysed reaction is IMP + NH4(+) + NADP(+) = GMP + NADPH + 2 H(+). Functionally, catalyzes the irreversible NADPH-dependent deamination of GMP to IMP. It functions in the conversion of nucleobase, nucleoside and nucleotide derivatives of G to A nucleotides, and in maintaining the intracellular balance of A and G nucleotides. The protein is GMP reductase of Oenococcus oeni (strain ATCC BAA-331 / PSU-1).